Consider the following 725-residue polypeptide: Protein ALEX (725 aa).

Disordered regions lie at residues 1–93, 177–226, 256–340, 396–481, 508–528, 584–624, and 638–675; these read MSPS…ARAQ, GAIA…PLTD, EPPL…PSQP, PILT…SPLL, PMQVHWSGEPGHSQLLPPLGH, LPGL…AASS, and ATRSGATQSATSSPEPSEAASVYPSVPDHDPSAPGRPR. Residues 41 to 51 are compositionally biased toward basic residues; that stretch reads HLRRKPCHSRH. The segment covering 260 to 276 has biased composition (polar residues); the sequence is GSTTTPLSIWTAPQSQV. 2 stretches are compositionally biased toward basic and acidic residues: residues 297–307 and 314–326; these read QLSEKQPRWKE and RWKEKSPLRREGT. 2 stretches are compositionally biased toward pro residues: residues 423-442 and 459-473; these read PSQPPRQSLPPRPSLPPGQP and RSLPPGQPLSPPRSP. Composition is skewed to low complexity over residues 584-598 and 643-658; these read LPGLTSTSGAEAAAG and ATQSATSSPEPSEAAS.

This sequence belongs to the ALEX family. Interacts with the N-terminal region of the XLas isoforms of guanine nucleotide-binding protein G(s) subunit alpha.

It localises to the cell membrane. The protein resides in the cell projection. The protein localises to the ruffle. Functionally, may inhibit the adenylyl cyclase-stimulating activity of guanine nucleotide-binding protein G(s) subunit alpha which is produced from the same locus in a different open reading frame. The polypeptide is Protein ALEX (Mus musculus (Mouse)).